A 294-amino-acid polypeptide reads, in one-letter code: Beta-lactamase (294 aa).

A signal peptide spans Met-1 to Ala-30. The active-site Acyl-ester intermediate is Ser-75. Position 239-241 (Lys-239–Gly-241) interacts with substrate.

It belongs to the class-A beta-lactamase family.

The enzyme catalyses a beta-lactam + H2O = a substituted beta-amino acid. The chain is Beta-lactamase (blaA) from Yersinia enterocolitica.